Reading from the N-terminus, the 121-residue chain is Large ribosomal subunit protein uL18 (121 aa).

Residues 1 to 22 show a composition bias toward basic residues; it reads MIKKPDKKTLRQGKHKRVRRKV. The disordered stretch occupies residues 1–23; the sequence is MIKKPDKKTLRQGKHKRVRRKVA.

It belongs to the universal ribosomal protein uL18 family. Part of the 50S ribosomal subunit; part of the 5S rRNA/L5/L18/L25 subcomplex. Contacts the 5S and 23S rRNAs.

Functionally, this is one of the proteins that bind and probably mediate the attachment of the 5S RNA into the large ribosomal subunit, where it forms part of the central protuberance. The polypeptide is Large ribosomal subunit protein uL18 (Syntrophomonas wolfei subsp. wolfei (strain DSM 2245B / Goettingen)).